A 306-amino-acid chain; its full sequence is Low-density lipoprotein receptor class A domain-containing protein 4 (306 aa).

Topologically, residues 1–64 (MPEAGFQATN…PPGIFNSELE (64 aa)) are lumenal. The 33-residue stretch at 16-48 (KFTCTSGKCLYLGSLVCNQQNDCGDNSDEENCL) folds into the LDL-receptor class A domain. 2 disulfides stabilise this stretch: Cys19-Cys38 and Cys32-Cys47. A helical membrane pass occupies residues 65–85 (FAQIIIIVVVVTVMVVVIVCL). Over 86–306 (LNHYKVSTRS…GKDRKPGNLV (221 aa)) the chain is Cytoplasmic. Positions 180 to 183 (PPPY) match the PPxY motif 1 motif. An SMAD interaction motif (SIM) motif is present at residues 208–211 (PPNR). Residues 252–255 (PPTY) carry the PPxY motif 2 motif. The tract at residues 286–306 (NNAESTIVPIKGKDRKPGNLV) is disordered. The span at 296 to 306 (KGKDRKPGNLV) shows a compositional bias: basic and acidic residues.

The protein belongs to the PMEPA1 family. Interacts with PMEPA1. Interacts (via the SMAD interaction motif) with SMAD2 and SMAD3. Expressed in lymphocytes.

It is found in the early endosome membrane. Functionally, functions as a negative regulator of TGF-beta signaling and thereby probably plays a role in cell proliferation, differentiation, apoptosis, motility, extracellular matrix production and immunosuppression. In the canonical TGF-beta pathway, ZFYVE9/SARA recruits the intracellular signal transducer and transcriptional modulators SMAD2 and SMAD3 to the TGF-beta receptor. Phosphorylated by the receptor, SMAD2 and SMAD3 then form a heteromeric complex with SMAD4 that translocates to the nucleus to regulate transcription. Through interaction with SMAD2 and SMAD3, LDLRAD4 may compete with ZFYVE9 and SMAD4 and prevent propagation of the intracellular signal. The protein is Low-density lipoprotein receptor class A domain-containing protein 4 (LDLRAD4) of Homo sapiens (Human).